Reading from the N-terminus, the 368-residue chain is Mitogen-activated protein kinase HOG1B (368 aa).

One can recognise a Protein kinase domain in the interval 20–299; sequence YVNLEPVGMG…ASQALAHPYL (280 aa). ATP contacts are provided by residues 26-34 and lysine 49; that span reads VGMGAFGLV. Residue aspartate 141 is the Proton acceptor of the active site. Threonine 171 carries the post-translational modification Phosphothreonine. Positions 171–173 match the TXY motif; it reads TGY. Residue tyrosine 173 is modified to Phosphotyrosine.

It belongs to the protein kinase superfamily. Ser/Thr protein kinase family. MAP kinase subfamily. HOG1 sub-subfamily. Requires Mg(2+) as cofactor. Post-translationally, phosphorylated. Dually phosphorylated on Thr-171 and Tyr-173, which activates the enzyme. Rapidly dephosphorylated upon either hypo- or hyperosmotic shock.

Its subcellular location is the cytoplasm. The protein resides in the nucleus. The enzyme catalyses L-seryl-[protein] + ATP = O-phospho-L-seryl-[protein] + ADP + H(+). The catalysed reaction is L-threonyl-[protein] + ATP = O-phospho-L-threonyl-[protein] + ADP + H(+). Its activity is regulated as follows. Activated by tyrosine and threonine phosphorylation. Its function is as follows. Mitogen-activated protein kinase involved in a signal transduction pathway that is activated by changes in the osmolarity of the extracellular environment. Controls osmotic regulation of transcription of target genes. This chain is Mitogen-activated protein kinase HOG1B (HOG1B), found in Wallemia ichthyophaga (strain EXF-994 / CBS 113033).